A 653-amino-acid polypeptide reads, in one-letter code: Elongation factor 4 (653 aa).

The disordered stretch occupies residues 1-30 (MRTPCSQHRRDRPSAIGSQLPDADTLDTRQ). Positions 50–231 (AQIRNFCIIA…EVVRQVPPPQ (182 aa)) constitute a tr-type G domain. Residues 62 to 67 (DHGKST) and 178 to 181 (NKID) each bind GTP.

Belongs to the TRAFAC class translation factor GTPase superfamily. Classic translation factor GTPase family. LepA subfamily.

The protein localises to the cell membrane. It catalyses the reaction GTP + H2O = GDP + phosphate + H(+). Required for accurate and efficient protein synthesis under certain stress conditions. May act as a fidelity factor of the translation reaction, by catalyzing a one-codon backward translocation of tRNAs on improperly translocated ribosomes. Back-translocation proceeds from a post-translocation (POST) complex to a pre-translocation (PRE) complex, thus giving elongation factor G a second chance to translocate the tRNAs correctly. Binds to ribosomes in a GTP-dependent manner. The chain is Elongation factor 4 from Mycobacterium bovis (strain ATCC BAA-935 / AF2122/97).